A 176-amino-acid polypeptide reads, in one-letter code: Shikimate kinase (176 aa).

14 to 19 contributes to the ATP binding site; the sequence is GAGKST. A Mg(2+)-binding site is contributed by S18. Residues D36, R60, and G83 each coordinate substrate. R121 serves as a coordination point for ATP. Residue R140 participates in substrate binding.

The protein belongs to the shikimate kinase family. Monomer. Mg(2+) is required as a cofactor.

It is found in the cytoplasm. The catalysed reaction is shikimate + ATP = 3-phosphoshikimate + ADP + H(+). The protein operates within metabolic intermediate biosynthesis; chorismate biosynthesis; chorismate from D-erythrose 4-phosphate and phosphoenolpyruvate: step 5/7. Functionally, catalyzes the specific phosphorylation of the 3-hydroxyl group of shikimic acid using ATP as a cosubstrate. The sequence is that of Shikimate kinase from Francisella tularensis subsp. holarctica (strain FTNF002-00 / FTA).